Here is a 349-residue protein sequence, read N- to C-terminus: Ureidoglycolate dehydrogenase (NAD(+)) (349 aa).

His-116 serves as the catalytic Proton acceptor. NAD(+)-binding positions include Ser-140, 174–176 (DMA), Lys-224, and 306–308 (GQD).

The protein belongs to the LDH2/MDH2 oxidoreductase family. In terms of assembly, homodimer.

It localises to the cytoplasm. It carries out the reaction (S)-ureidoglycolate + NAD(+) = N-carbamoyl-2-oxoglycine + NADH + H(+). It participates in nitrogen metabolism; (S)-allantoin degradation; oxalurate from (S)-ureidoglycolate: step 1/1. In terms of biological role, allD plays a pivotal role as a metabolic branch-point enzyme in nitrogen utilization via the assimilation of allantoin. It is able to utilize allantoin as a sole source of nitrogen under anaerobic conditions. Catalyzes the oxidation of ureidoglycolate to oxalurate. The protein is Ureidoglycolate dehydrogenase (NAD(+)) of Escherichia coli (strain K12).